Reading from the N-terminus, the 569-residue chain is Urease subunit beta (569 aa).

Residues 131–569 (GGIDTHIHFI…VSLAQLFSIF (439 aa)) form the Urease domain. H136, H138, and K219 together coordinate Ni(2+). K219 bears the N6-carboxylysine mark. Substrate is bound at residue H221. The Ni(2+) site is built by H248 and H274. H322 (proton donor) is an active-site residue. Position 362 (D362) interacts with Ni(2+).

The protein belongs to the metallo-dependent hydrolases superfamily. Urease alpha subunit family. In terms of assembly, heterohexamer of 3 UreA (alpha) and 3 UreB (beta) subunits. Four heterohexamers assemble to form a 16 nm dodecameric complex. Ni cation is required as a cofactor. In terms of processing, carboxylation allows a single lysine to coordinate two nickel ions.

The protein localises to the cytoplasm. The enzyme catalyses urea + 2 H2O + H(+) = hydrogencarbonate + 2 NH4(+). Its pathway is nitrogen metabolism; urea degradation; CO(2) and NH(3) from urea (urease route): step 1/1. Ammonia produced by ureolysis increases the gastric pH thereby providing an environment permissive for colonization of the stomach. The polypeptide is Urease subunit beta (Helicobacter pylori (strain J99 / ATCC 700824) (Campylobacter pylori J99)).